An 828-amino-acid polypeptide reads, in one-letter code: ADP-ribosylation factor GTPase-activating protein AGD1 (828 aa).

Residues 1 to 225 (MHFAKLDDSP…INQVLAYAHQ (225 aa)) enclose the BAR domain. A coiled-coil region spans residues 225–255 (QSRECANYEMASLNERMQEYQRQVDRETRNS). The segment at 247–268 (QVDRETRNSCVSPTGDGMRHNS) is disordered. The PH domain maps to 288 to 425 (QTIRQGYLSK…WIEKITGVIA (138 aa)). Ser441 is subject to Phosphoserine. An Arf-GAP domain is found at 498-643 (EKPIDVLTRV…IFVRKAIDSQ (146 aa)). The C4-type zinc finger occupies 513–536 (CADCGAPEPDWASLNLGVLICIEC). The segment covering 590 to 600 (TSSASRSSGTP) has biased composition (low complexity). The tract at residues 590–611 (TSSASRSSGTPKSDRPRKLLVR) is disordered. ANK repeat units lie at residues 735-764 (NDCS…KINA) and 768-797 (KGRT…DPNA).

In terms of tissue distribution, expressed in roots, but not in hypocotyls or cotyledons. Low levels detected in leaf and shoot apical meristems and in siliques.

The protein localises to the endosome. Probable GTPase-activating protein. Regulator of membrane trafficking. Required for maintaining a straight growth of root hairs. This Arabidopsis thaliana (Mouse-ear cress) protein is ADP-ribosylation factor GTPase-activating protein AGD1 (AGD1).